A 459-amino-acid polypeptide reads, in one-letter code: uncharacterized protein (459 aa).

Belongs to the Rab GDI family.

It localises to the cytoplasm. It is found in the nucleus. This is an uncharacterized protein from Schizosaccharomyces pombe (strain 972 / ATCC 24843) (Fission yeast).